The following is a 119-amino-acid chain: Membrane-anchored ubiquitin-fold protein 3 (119 aa).

One can recognise a Ubiquitin-like domain in the interval 8–76 (IEVKFRLFDG…NNRTLAESRV (69 aa)). Residue Cys-116 is modified to Cysteine methyl ester. Cys-116 carries S-geranylgeranyl cysteine lipidation. Residues 117 to 119 (TIL) constitute a propeptide, removed in mature form.

It localises to the cell membrane. Its function is as follows. May serve as docking site to facilitate the association of other proteins to the plasma membrane. This Oryza sativa subsp. japonica (Rice) protein is Membrane-anchored ubiquitin-fold protein 3 (MUB3).